The following is a 488-amino-acid chain: Germacrene A hydroxylase (488 aa).

At 1–6 (MELSLT) the chain is on the cytoplasmic side. A helical; Signal-anchor for type II membrane protein membrane pass occupies residues 7–23 (TSIALATIVLILYKLAT). At 24 to 488 (RPKSNKKRLP…KTELILVPSF (465 aa)) the chain is on the lumenal side. Residues N260 and N379 are each glycosylated (N-linked (GlcNAc...) asparagine). C432 lines the heme pocket.

The protein belongs to the cytochrome P450 family. Heme is required as a cofactor.

It localises to the endoplasmic reticulum membrane. The protein resides in the microsome membrane. It catalyses the reaction (+)-(R)-germacrene A + 3 reduced [NADPH--hemoprotein reductase] + 3 O2 = germacra-1(10),4,11(13)-trien-12-oate + 3 oxidized [NADPH--hemoprotein reductase] + 4 H2O + 4 H(+). The protein operates within secondary metabolite biosynthesis; terpenoid biosynthesis. Its activity is regulated as follows. Inhibited by cytochrome C, miconazole, aminobenzotriazole, metyrapone and clotrimazole. Functionally, involved in the biosynthesis of germacrene-derived sesquiterpene lactones. Catalyzes three consecutive oxidations of germacrene A to produce germacrene A acid. Could also catalyze the three-step oxidation of non-natural substrate amorphadiene to artemisinic acid. Can use beta-elemene as substrate. The polypeptide is Germacrene A hydroxylase (Cichorium intybus (Chicory)).